A 194-amino-acid chain; its full sequence is Fibroblast growth factor 7 (194 aa).

The N-terminal stretch at 1–31 is a signal peptide; the sequence is MHKWILTWILPTLLYRSCFHIICLVGTISLA. N45 carries N-linked (GlcNAc...) asparagine glycosylation.

It belongs to the heparin-binding growth factors family. As to quaternary structure, interacts with FGFBP1. Interacts with FGFR2. Affinity between fibroblast growth factors (FGFs) and their receptors is increased by heparan sulfate glycosaminoglycans that function as coreceptors. In terms of tissue distribution, epithelial cell.

The protein resides in the secreted. In terms of biological role, plays an important role in the regulation of embryonic development, cell proliferation and cell differentiation. Required for normal branching morphogenesis. Growth factor active on keratinocytes. Possible major paracrine effector of normal epithelial cell proliferation. This is Fibroblast growth factor 7 (FGF7) from Homo sapiens (Human).